Here is a 123-residue protein sequence, read N- to C-terminus: Small ribosomal subunit protein uS12 (123 aa).

At Asp-89 the chain carries 3-methylthioaspartic acid. Residues 104–123 (SVGVKDRKKSRSKYGAKRPK) form a disordered region. Basic residues predominate over residues 109-123 (DRKKSRSKYGAKRPK).

This sequence belongs to the universal ribosomal protein uS12 family. In terms of assembly, part of the 30S ribosomal subunit. Contacts proteins S8 and S17. May interact with IF1 in the 30S initiation complex.

Functionally, with S4 and S5 plays an important role in translational accuracy. In terms of biological role, interacts with and stabilizes bases of the 16S rRNA that are involved in tRNA selection in the A site and with the mRNA backbone. Located at the interface of the 30S and 50S subunits, it traverses the body of the 30S subunit contacting proteins on the other side and probably holding the rRNA structure together. The combined cluster of proteins S8, S12 and S17 appears to hold together the shoulder and platform of the 30S subunit. The chain is Small ribosomal subunit protein uS12 from Geotalea daltonii (strain DSM 22248 / JCM 15807 / FRC-32) (Geobacter daltonii).